The sequence spans 164 residues: Thiol peroxidase (164 aa).

In terms of domain architecture, Thioredoxin spans 18 to 163 (VKTGETAPEF…FESALEAYRN (146 aa)). Residue Cys-60 is the Cysteine sulfenic acid (-SOH) intermediate of the active site. Cys-60 and Cys-93 are oxidised to a cystine.

Belongs to the peroxiredoxin family. Tpx subfamily. Homodimer.

The enzyme catalyses a hydroperoxide + [thioredoxin]-dithiol = an alcohol + [thioredoxin]-disulfide + H2O. In terms of biological role, thiol-specific peroxidase that catalyzes the reduction of hydrogen peroxide and organic hydroperoxides to water and alcohols, respectively. Plays a role in cell protection against oxidative stress by detoxifying peroxides. The polypeptide is Thiol peroxidase (Staphylococcus saprophyticus subsp. saprophyticus (strain ATCC 15305 / DSM 20229 / NCIMB 8711 / NCTC 7292 / S-41)).